Reading from the N-terminus, the 894-residue chain is Bifunctional enzyme RhaA/RhaB (894 aa).

Residues 1 to 465 (MGEYRLAVDI…TAFPVTYFLP (465 aa)) form a rhamnulokinase region. Positions 466–894 (QRSESHVSSR…KRESEKAKQR (429 aa)) are L-rhamnose isomerase. Residues His-730, Asp-762, and Asp-764 each contribute to the Mn(2+) site.

The protein in the N-terminal section; belongs to the rhamnulokinase family. It in the C-terminal section; belongs to the rhamnose isomerase family. Mn(2+) is required as a cofactor.

The protein resides in the cytoplasm. It catalyses the reaction L-rhamnulose + ATP = L-rhamnulose 1-phosphate + ADP + H(+). The enzyme catalyses L-rhamnopyranose = L-rhamnulose. The protein operates within carbohydrate degradation; L-rhamnose degradation; glycerone phosphate from L-rhamnose: step 1/3. It functions in the pathway carbohydrate degradation; L-rhamnose degradation; glycerone phosphate from L-rhamnose: step 2/3. The polypeptide is Bifunctional enzyme RhaA/RhaB (rhaAB) (Shouchella clausii (strain KSM-K16) (Alkalihalobacillus clausii)).